A 369-amino-acid chain; its full sequence is Anhydro-N-acetylmuramic acid kinase (369 aa).

ATP is bound at residue 12 to 19 (GTSMDGVD).

Belongs to the anhydro-N-acetylmuramic acid kinase family.

The catalysed reaction is 1,6-anhydro-N-acetyl-beta-muramate + ATP + H2O = N-acetyl-D-muramate 6-phosphate + ADP + H(+). It participates in amino-sugar metabolism; 1,6-anhydro-N-acetylmuramate degradation. It functions in the pathway cell wall biogenesis; peptidoglycan recycling. Its function is as follows. Catalyzes the specific phosphorylation of 1,6-anhydro-N-acetylmuramic acid (anhMurNAc) with the simultaneous cleavage of the 1,6-anhydro ring, generating MurNAc-6-P. Is required for the utilization of anhMurNAc either imported from the medium or derived from its own cell wall murein, and thus plays a role in cell wall recycling. The sequence is that of Anhydro-N-acetylmuramic acid kinase from Shewanella sp. (strain ANA-3).